A 474-amino-acid polypeptide reads, in one-letter code: Sulfide dehydrogenase subunit alpha (474 aa).

The propeptide occupies 1–2 (MP). 4 residues coordinate [4Fe-4S] cluster: Cys-42, Cys-45, Cys-52, and Cys-56. 3 residues coordinate [3Fe-4S] cluster: Cys-101, Cys-107, and Cys-111.

Heterodimer of alpha and beta subunits. FAD serves as cofactor. [3Fe-4S] cluster is required as a cofactor. It depends on [4Fe-4S] cluster as a cofactor.

The protein resides in the cytoplasm. The catalysed reaction is n sulfur + hydrogen sulfide + NADP(+) = (n+1) sulfur + NADPH. It carries out the reaction 2 reduced [2Fe-2S]-[ferredoxin] + NADP(+) + H(+) = 2 oxidized [2Fe-2S]-[ferredoxin] + NADPH. Its function is as follows. A bifunctional enzyme that catalyzes the reduction of elemental sulfur or polysulfide to hydrogen sulfide with NADPH as electron donor. Also functions as a reduced ferredoxin:NADP oxidoreductase with a very high affinity for reduced ferredoxin. Exhibits a broad specificity for various physiological and non-physiological substrates with varied reduction potentials such as methyl viologen, benzyl viologen, FAD, FMN, methylene blue, 2,6-dichlorophenolindophenol (DCIP), cytochrome C and ferricyanide with highest preference for benzyl viologen. Does not reduce fumarate, succinate, nitrate, nitrite, sulfate, sulfite or protons. Does not possess any hydrogenase activity or NADPH-dependent glutamate synthase activity. In Pyrococcus furiosus (strain ATCC 43587 / DSM 3638 / JCM 8422 / Vc1), this protein is Sulfide dehydrogenase subunit alpha.